Reading from the N-terminus, the 96-residue chain is Co-chaperonin GroES (96 aa).

The protein belongs to the GroES chaperonin family. In terms of assembly, heptamer of 7 subunits arranged in a ring. Interacts with the chaperonin GroEL.

Its subcellular location is the cytoplasm. Its function is as follows. Together with the chaperonin GroEL, plays an essential role in assisting protein folding. The GroEL-GroES system forms a nano-cage that allows encapsulation of the non-native substrate proteins and provides a physical environment optimized to promote and accelerate protein folding. GroES binds to the apical surface of the GroEL ring, thereby capping the opening of the GroEL channel. This is Co-chaperonin GroES from Photobacterium profundum (strain SS9).